The sequence spans 2564 residues: Spectrin beta chain, non-erythrocytic 4 (2564 aa).

The disordered stretch occupies residues 1 to 37 (MAQVPGEVDNMEGLPAPNNNPAARWESPDRGWEREQP). The actin-binding stretch occupies residues 1–282 (MAQVPGEVDN…IITYVVSFYH (282 aa)). Positions 26–36 (ESPDRGWEREQ) are enriched in basic and acidic residues. Calponin-homology (CH) domains lie at 61–165 (AVQK…LRFQ) and 180–285 (RSAK…HYFS). Spectrin repeat units follow at residues 311–418 (IERY…AALR), 430–533 (LAQR…RLEQ), 536–641 (ALQK…AELE), 774–879 (ALHQ…WLRD), 884–982 (YRMF…RKEE), 1089–1196 (RLQR…EALV), 1306–1407 (ELQH…RQLF), 1412–1512 (ADQL…RLLL), 1515–1617 (KELH…QQVL), 1623–1725 (VEQY…ALEQ), 1728–1830 (WLYQ…AQLL), 1835–1935 (ELHK…EDAR), 1944–2046 (ALRF…WLQQ), and 2049–2123 (EVHQ…QSKQ). The tract at residues 1853–1872 (KRRRLPRLTTPPEPRPSASS) is disordered. Over residues 2208–2225 (PAAPEDAAETPATPAAAE) the composition is skewed to low complexity. Disordered stretches follow at residues 2208–2439 (PAAP…KSSN) and 2533–2564 (ARWG…GRRK). 3 stretches are compositionally biased toward basic and acidic residues: residues 2227-2254 (VRPR…RQES), 2268-2278 (ERQESAEHEAA), and 2287-2318 (EQME…DLVK). Over residues 2343 to 2355 (PSLPQPRELPPGR) the composition is skewed to pro residues. Basic and acidic residues-rich tracts occupy residues 2362–2377 (LPER…ARDR) and 2424–2435 (FLLRKRELDANR). One can recognise a PH domain in the interval 2418–2527 (TVQHEGFLLR…WLEAVASSVA (110 aa)). The span at 2538-2547 (TLPTTSSTDE) shows a compositional bias: polar residues. The segment covering 2548 to 2564 (GNPKREGGDRRASGRRK) has biased composition (basic and acidic residues).

It belongs to the spectrin family. In terms of tissue distribution, expressed in skeletal muscle at the sarcolemma and in the muscle capillaries (at protein level). Abundantly expressed in brain and pancreatic islets.

The protein localises to the cytoplasm. It is found in the cytoskeleton. It localises to the cell cortex. The chain is Spectrin beta chain, non-erythrocytic 4 (SPTBN4) from Homo sapiens (Human).